The chain runs to 571 residues: E3 ubiquitin-protein ligase CHFR (571 aa).

The tract at residues 1–21 (MERPEEGKQSPPPQPWGRLLR) is disordered. Positions 38 to 89 (WTIGRRRGCDLSFPSNKLVSGDHCRIAVDEKSGQVTLEDTSTSGTVINKLKV) constitute an FHA domain. Residues 113 to 138 (EHRSGGGGISPKGSGPSVASDEVSSF) are disordered. Ser152 bears the Phosphoserine mark. The RING-type zinc finger occupies 212 to 251 (CIICQDLLHDCVSLQPCMHTFCAACYSGWMERSSLCPTCR). Phosphothreonine is present on Thr294. Residues 297-325 (MLQPKVRRSFSDEEGSSEDLLELSDVDSE) form a disordered region. Residues 308-325 (DEEGSSEDLLELSDVDSE) show a composition bias toward acidic residues. The PBZ-type zinc finger occupies 540–562 (PDCYWGRNCRTQVKAHHAMKFNH).

It belongs to the CHFR family. As to quaternary structure, interacts with HDAC1 and HDAC2. Interacts with PML (with sumoylated form of PML). Poly-ADP-ribosylated. In addition to binding non covalently poly(ADP-ribose) via its PBZ-type zinc finger, the protein is also covalently poly-ADP-ribosylated by PARP1. Post-translationally, autoubiquitinated; may regulate its cellular level. In terms of processing, phosphorylated by PKB. Phosphorylation may affect its E3 ligase activity.

It localises to the nucleus. It is found in the PML body. The enzyme catalyses S-ubiquitinyl-[E2 ubiquitin-conjugating enzyme]-L-cysteine + [acceptor protein]-L-lysine = [E2 ubiquitin-conjugating enzyme]-L-cysteine + N(6)-ubiquitinyl-[acceptor protein]-L-lysine.. It functions in the pathway protein modification; protein ubiquitination. In terms of biological role, E3 ubiquitin-protein ligase that functions in the antephase checkpoint by actively delaying passage into mitosis in response to microtubule poisons. Acts in early prophase before chromosome condensation, when the centrosome move apart from each other along the periphery of the nucleus. Probably involved in signaling the presence of mitotic stress caused by microtubule poisons by mediating the 'Lys-48'-linked ubiquitination of target proteins, leading to their degradation by the proteasome. Promotes the ubiquitination and subsequent degradation of AURKA and PLK1. Probably acts as a tumor suppressor, possibly by mediating the polyubiquitination of HDAC1, leading to its degradation. May also promote the formation of 'Lys-63'-linked polyubiquitin chains and functions with the specific ubiquitin-conjugating UBC13-MMS2 (UBE2N-UBE2V2) heterodimer. Substrates that are polyubiquitinated at 'Lys-63' are usually not targeted for degradation, but are rather involved in signaling cellular stress. The sequence is that of E3 ubiquitin-protein ligase CHFR (CHFR) from Pongo abelii (Sumatran orangutan).